Reading from the N-terminus, the 417-residue chain is Serine hydroxymethyltransferase (417 aa).

(6S)-5,6,7,8-tetrahydrofolate is bound by residues Leu116 and 120–122 (GHL). Lys225 is subject to N6-(pyridoxal phosphate)lysine. 350-352 (SPF) is a (6S)-5,6,7,8-tetrahydrofolate binding site.

This sequence belongs to the SHMT family. In terms of assembly, homodimer. Pyridoxal 5'-phosphate is required as a cofactor.

The protein localises to the cytoplasm. It catalyses the reaction (6R)-5,10-methylene-5,6,7,8-tetrahydrofolate + glycine + H2O = (6S)-5,6,7,8-tetrahydrofolate + L-serine. It participates in one-carbon metabolism; tetrahydrofolate interconversion. It functions in the pathway amino-acid biosynthesis; glycine biosynthesis; glycine from L-serine: step 1/1. Its function is as follows. Catalyzes the reversible interconversion of serine and glycine with tetrahydrofolate (THF) serving as the one-carbon carrier. This reaction serves as the major source of one-carbon groups required for the biosynthesis of purines, thymidylate, methionine, and other important biomolecules. Also exhibits THF-independent aldolase activity toward beta-hydroxyamino acids, producing glycine and aldehydes, via a retro-aldol mechanism. The sequence is that of Serine hydroxymethyltransferase from Ligilactobacillus salivarius (strain UCC118) (Lactobacillus salivarius).